The following is a 361-amino-acid chain: Phospho-N-acetylmuramoyl-pentapeptide-transferase (361 aa).

10 consecutive transmembrane segments (helical) span residues 26 to 46, 73 to 93, 98 to 118, 139 to 159, 168 to 188, 200 to 220, 237 to 257, 264 to 284, 289 to 309, and 339 to 359; these read SILAALTALFLSLWIGPVLIQ, TMGGSLILMTVTLSVLLWGDL, VWLVLVVMLAFGAIGWYDDWI, IFGLAAGLFLYFTADVPAAVT, IALPLTSISFVAITYFWIVGF, GLAIMPTVLVACALGVFAYAS, AGDLIIICAAIAGAGLGFLWF, VFMGDIGALALGAVLGTIAVI, LVLVVMGGVFVIETLSVIIQV, and VIVRFWIISVVLVLVGLATLK.

This sequence belongs to the glycosyltransferase 4 family. MraY subfamily. Mg(2+) serves as cofactor.

The protein resides in the cell inner membrane. The catalysed reaction is UDP-N-acetyl-alpha-D-muramoyl-L-alanyl-gamma-D-glutamyl-meso-2,6-diaminopimeloyl-D-alanyl-D-alanine + di-trans,octa-cis-undecaprenyl phosphate = di-trans,octa-cis-undecaprenyl diphospho-N-acetyl-alpha-D-muramoyl-L-alanyl-D-glutamyl-meso-2,6-diaminopimeloyl-D-alanyl-D-alanine + UMP. It participates in cell wall biogenesis; peptidoglycan biosynthesis. Functionally, catalyzes the initial step of the lipid cycle reactions in the biosynthesis of the cell wall peptidoglycan: transfers peptidoglycan precursor phospho-MurNAc-pentapeptide from UDP-MurNAc-pentapeptide onto the lipid carrier undecaprenyl phosphate, yielding undecaprenyl-pyrophosphoryl-MurNAc-pentapeptide, known as lipid I. The protein is Phospho-N-acetylmuramoyl-pentapeptide-transferase of Xylella fastidiosa (strain M12).